A 62-amino-acid polypeptide reads, in one-letter code: 6.7 kDa chloroplast outer envelope membrane protein (62 aa).

The Chloroplast intermembrane segment spans residues 1-17 (MESVAKPATTKEGSAKQ). A helical membrane pass occupies residues 18 to 40 (AAIVVGVLALGWFAIQVAFIPLF). Residues 41–62 (NKVRGGGSDKKDDDVNAFTPDT) lie on the Cytoplasmic side of the membrane.

The protein resides in the plastid. Its subcellular location is the chloroplast outer membrane. This chain is 6.7 kDa chloroplast outer envelope membrane protein, found in Spinacia oleracea (Spinach).